A 500-amino-acid chain; its full sequence is C6 finger domain transcription factor sirZ (500 aa).

The segment at residues 28–54 is a DNA-binding region (zn(2)-C6 fungal-type); that stretch reads CNACHEVKLKCLGGQPCARCRNKQVEC. Basic and acidic residues predominate over residues 79-88; that stretch reads QAKAMSRPEE. 2 disordered regions span residues 79 to 168 and 302 to 332; these read QAKA…EQIS and AGSF…GMYQ. A compositionally biased stretch (acidic residues) spans 135–147; the sequence is GAEEELLDQEERD. Residues 154–165 show a composition bias toward low complexity; sequence LVENPPNLNPLE. Residues 304–316 are compositionally biased toward polar residues; sequence SFSTSGPGSSQEG. A compositionally biased stretch (low complexity) spans 317-328; it reads SHFLSSRHSQSS.

The protein resides in the nucleus. Functionally, transcription factor that regulates sirodesmin production and contributes to virulence. Probably binds to the consensus motif TCGGN(3)CCGA found in the promoters of sirT, sirP, sirO, sirN, sirP, sirB, sirR, sirJ and sirQ. The polypeptide is C6 finger domain transcription factor sirZ (Leptosphaeria maculans (Blackleg fungus)).